The following is a 1172-amino-acid chain: Putative cadmium/zinc-transporting ATPase HMA4 (1172 aa).

The Cytoplasmic portion of the chain corresponds to 1–93 (MALQNKEEEK…VRVNGETSFK (93 aa)). In terms of domain architecture, HMA spans 17-83 (QKSYFDVLGI…ALNEARLEAN (67 aa)). The helical transmembrane segment at 94-115 (NKWPSPFAVVSGLLLLLSFLKF) threads the bilayer. At 116–118 (VYS) the chain is on the extracellular side. Residues 119–138 (PLRWLAVAAVAAGIYPILAK) traverse the membrane as a helical segment. Residues 139–145 (AFASIKR) are Cytoplasmic-facing. The chain crosses the membrane as a helical span at residues 146-166 (PRIDINILVIITVIATLAMQD). Residue Phe167 is a topological domain, extracellular. The chain crosses the membrane as a helical span at residues 168–188 (MEAAAVVFLFTISDWLETRAS). Topologically, residues 189–314 (YKATSVMQSL…KTKSQRLIDK (126 aa)) are cytoplasmic. The helical transmembrane segment at 315–337 (CSQYYTPAIILVSACVAIVPVIM) threads the bilayer. Residues 338–345 (KVHNLKHW) are Extracellular-facing. Residues 346-363 (FHLALVVLVSGCPCGLIL) form a helical membrane-spanning segment. The Cytoplasmic portion of the chain corresponds to 364 to 656 (STPVATFCAL…KLARRARRKV (293 aa)). The active-site 4-aspartylphosphate intermediate is Asp401. 2 residues coordinate Mg(2+): Asp601 and Asp605. The helical transmembrane segment at 657–676 (VENVCLSIILKAGILALAFA) threads the bilayer. The Extracellular segment spans residues 677–680 (GHPL). The chain crosses the membrane as a helical span at residues 681 to 700 (IWAAVLVDVGTCLLVIFNSM). Residues 701–1172 (LLLREKKKIG…HHHHHHHVSA (472 aa)) are Cytoplasmic-facing.

It belongs to the cation transport ATPase (P-type) (TC 3.A.3) family. Type IB subfamily.

Its subcellular location is the membrane. The catalysed reaction is Zn(2+)(in) + ATP + H2O = Zn(2+)(out) + ADP + phosphate + H(+). It catalyses the reaction Cd(2+)(in) + ATP + H2O = Cd(2+)(out) + ADP + phosphate + H(+). Involved in cadmium/zinc transport. This Arabidopsis thaliana (Mouse-ear cress) protein is Putative cadmium/zinc-transporting ATPase HMA4 (HMA4).